Consider the following 359-residue polypeptide: Ornithine cyclodeaminase (359 aa).

Positions 53 and 77 each coordinate L-ornithine. NAD(+) contacts are provided by residues threonine 92, arginine 120, 147–148, aspartate 169, threonine 209, 232–235, lysine 239, and serine 300; these read AQ and VGGD. Arginine 120 is a binding site for L-ornithine. Aspartate 235 lines the L-ornithine pocket. Aspartate 235 acts as the Proton donor/acceptor in catalysis. Valine 301 contacts L-ornithine.

The protein belongs to the ornithine cyclodeaminase/mu-crystallin family. Requires NAD(+) as cofactor.

The catalysed reaction is L-ornithine = L-proline + NH4(+). The protein operates within amino-acid biosynthesis; L-proline biosynthesis; L-proline from L-ornithine: step 1/1. Functionally, catalyzes the conversion of L-ornithine into L-proline with release of ammonia. This chain is Ornithine cyclodeaminase, found in Brucella melitensis biotype 1 (strain ATCC 23456 / CCUG 17765 / NCTC 10094 / 16M).